Consider the following 390-residue polypeptide: Galactokinase (390 aa).

35-38 (EHTD) contributes to the substrate binding site. Position 125–131 (125–131 (GAGLSSS)) interacts with ATP. Ser131 and Glu163 together coordinate Mg(2+). The active-site Proton acceptor is the Asp175. Residue Tyr224 participates in substrate binding.

It belongs to the GHMP kinase family. GalK subfamily.

Its subcellular location is the cytoplasm. The enzyme catalyses alpha-D-galactose + ATP = alpha-D-galactose 1-phosphate + ADP + H(+). The protein operates within carbohydrate metabolism; galactose metabolism. Catalyzes the transfer of the gamma-phosphate of ATP to D-galactose to form alpha-D-galactose-1-phosphate (Gal-1-P). In Proteus mirabilis (strain HI4320), this protein is Galactokinase.